Reading from the N-terminus, the 208-residue chain is Putative chemokine-related protein FP248 (208 aa).

Positions 1–23 (MGTGGSLLCGCSLVLSCLCPSAS) are cleaved as a signal peptide. Asn-29 is a glycosylation site (N-linked (GlcNAc...) asparagine).

Its subcellular location is the secreted. The polypeptide is Putative chemokine-related protein FP248 (Homo sapiens (Human)).